The sequence spans 416 residues: UDP-N-acetylmuramoylalanine--D-glutamate ligase (416 aa).

An ATP-binding site is contributed by 108–114 (GTTGKTT).

It belongs to the MurCDEF family.

The protein localises to the cytoplasm. It carries out the reaction UDP-N-acetyl-alpha-D-muramoyl-L-alanine + D-glutamate + ATP = UDP-N-acetyl-alpha-D-muramoyl-L-alanyl-D-glutamate + ADP + phosphate + H(+). It participates in cell wall biogenesis; peptidoglycan biosynthesis. Its function is as follows. Cell wall formation. Catalyzes the addition of glutamate to the nucleotide precursor UDP-N-acetylmuramoyl-L-alanine (UMA). The chain is UDP-N-acetylmuramoylalanine--D-glutamate ligase from Chlamydia trachomatis serovar L2 (strain ATCC VR-902B / DSM 19102 / 434/Bu).